Consider the following 261-residue polypeptide: Carbonic anhydrase 1 (261 aa).

Position 2 is an N-acetylalanine (A2). Residues 4 to 261 (SDWGYDSPNG…LKGRTVRAFF (258 aa)) form the Alpha-carbonic anhydrase domain. H65 acts as the Proton donor/acceptor in catalysis. 3 residues coordinate Zn(2+): H95, H97, and H120. Residues T200 and 200–201 (TH) contribute to the substrate site.

It belongs to the alpha-carbonic anhydrase family. Requires Zn(2+) as cofactor.

It is found in the cytoplasm. The enzyme catalyses hydrogencarbonate + H(+) = CO2 + H2O. The catalysed reaction is urea = cyanamide + H2O. Its activity is regulated as follows. Inhibited by acetazolamide. In terms of biological role, catalyzes the reversible hydration of carbon dioxide. Can hydrate cyanamide to urea. This chain is Carbonic anhydrase 1 (CA1), found in Equus caballus (Horse).